The primary structure comprises 842 residues: Protein translocase subunit SecA (842 aa).

Residues Gln-85, 103 to 107 (GEGKT), and Asp-493 each bind ATP. Zn(2+) is bound by residues Cys-825, Cys-827, Cys-836, and His-837.

The protein belongs to the SecA family. Monomer and homodimer. Part of the essential Sec protein translocation apparatus which comprises SecA, SecYEG and auxiliary proteins SecDF. Other proteins may also be involved. Requires Zn(2+) as cofactor.

The protein localises to the cell membrane. It localises to the cytoplasm. It catalyses the reaction ATP + H2O + cellular proteinSide 1 = ADP + phosphate + cellular proteinSide 2.. Functionally, part of the Sec protein translocase complex. Interacts with the SecYEG preprotein conducting channel. Has a central role in coupling the hydrolysis of ATP to the transfer of proteins into and across the cell membrane, serving as an ATP-driven molecular motor driving the stepwise translocation of polypeptide chains across the membrane. The chain is Protein translocase subunit SecA from Streptococcus equi subsp. zooepidemicus (strain H70).